We begin with the raw amino-acid sequence, 1133 residues long: Nuclear pore complex-interacting protein family member B5 (1133 aa).

Residues 60-84 form a helical membrane-spanning segment; the sequence is WLHVIIAFPTSYKVVITLWIVYLWV. 3 disordered regions span residues 241–262, 290–575, and 868–1133; these read NRMG…NSLS, LTPL…IKTP, and ERLR…RRLS. Residues 252 to 262 are compositionally biased toward polar residues; the sequence is QQHSITDNSLS. Positions 349–359 are enriched in pro residues; it reads PLPPSALPSAP. 7 stretches are compositionally biased toward basic and acidic residues: residues 406 to 416, 448 to 458, 490 to 500, 528 to 538, 903 to 913, 945 to 955, and 987 to 997; these read DNIKTPAERLR.

It belongs to the NPIP family.

It is found in the membrane. This Homo sapiens (Human) protein is Nuclear pore complex-interacting protein family member B5 (NPIPB5).